The sequence spans 211 residues: UPF0637 protein Bsph_1379 (211 aa).

It belongs to the UPF0637 family.

This chain is UPF0637 protein Bsph_1379, found in Lysinibacillus sphaericus (strain C3-41).